Here is a 528-residue protein sequence, read N- to C-terminus: Protein MGF 505-7R (528 aa).

ANK repeat units lie at residues 54 to 83 (SIND…NLHY) and 261 to 291 (NIHR…PPNT).

This sequence belongs to the asfivirus MGF 505 family. In terms of assembly, interacts with host STING1. Interacts with host JAK1; this interaction leads to JAK1 degradation. Interacts with host JAK2; this interaction leads to JAK2 degradation. Interacts with host RELA; this interaction inhibits NF-kappa-B promoter activity.

Its subcellular location is the host cytoplasm. In terms of biological role, plays a role in virus cell tropism, and may be required for efficient virus replication in macrophages. Interferes with host NF-kappa-B promoter activity mediated by TLR8. Mechanistically, inhibits the phosphorylation and subsequent nuclear translocation of host NF-kappa-B RELA subunit downstream of TLR8. Promotes the expression of the autophagy-related protein host ULK1 to degrade host STING and inhibit the interferon response. Also inhibits JAK1- and JAK2-mediated signaling and thus negatively regulates the IFN-gamma signaling. This is Protein MGF 505-7R from African swine fever virus (isolate Tick/Malawi/Lil 20-1/1983) (ASFV).